The following is a 185-amino-acid chain: Putative manganese efflux pump MntP (185 aa).

6 consecutive transmembrane segments (helical) span residues isoleucine 6–leucine 26, phenylalanine 41–valine 61, valine 65–isoleucine 85, leucine 107–isoleucine 127, isoleucine 132–tryptophan 152, and serine 164–leucine 184.

The protein belongs to the MntP (TC 9.B.29) family.

Its subcellular location is the cell inner membrane. Probably functions as a manganese efflux pump. In Maridesulfovibrio salexigens (strain ATCC 14822 / DSM 2638 / NCIMB 8403 / VKM B-1763) (Desulfovibrio salexigens), this protein is Putative manganese efflux pump MntP.